A 122-amino-acid polypeptide reads, in one-letter code: Toxin CSTX-1 (122 aa).

The N-terminal stretch at 1-20 (MKVLIISAVLFITIFSNISA) is a signal peptide. The propeptide occupies 21-47 (EIEDDFLEDESFEAEDIIPFFENEQAR). 4 disulfides stabilise this stretch: Cys-49/Cys-64, Cys-56/Cys-73, Cys-63/Cys-91, and Cys-75/Cys-89. The interval 99 to 112 (AIETGLNIFRGLFK) is predicted alpha-helix. An Arginine amide; in CSTX-2a modification is found at Arg-108. Position 121 is a lysine amide; in omega-ctenitoxin-Cs1a (Lys-121).

The protein belongs to the neurotoxin 19 (CSTX) family. 04 (U1-Lctx) subfamily. As to quaternary structure, monomer. Interacts with CSTX-13 (AC P83919) (Kd=430 nM), but does not interact with CSTX-9 (AC P58604). In terms of tissue distribution, expressed by the venom gland.

The protein resides in the secreted. It is found in the target cell membrane. Spider venom toxin that shows calcium channel blocking activity and exhibits cytolytic activity by affecting the outer leaflet curvature and/or pore formation across the membrane. It blocks L-type calcium channels (Cav1/CACNA1) in mammalian neurons at nanomolar concentrations. Furthermore, it produces a slow voltage-independent block of mid/low and high voltage-activated calcium channels in cockroach neurons. Potassium ions, histamine, M-ctenitoxin-Cs1a (AC P83619), CSTX-9 (AC P58604), and CSTX-13 (AC P83919) synergistically increase the insecticidal activity of this toxin. In vivo, it causes paralysis in blow flies and provokes death in drosophila. Functionally, blocks voltage-activated calcium channels (Cav). Does not induce cell membrane permeability increase when tested on Xenopus oocytes. No alpha-helical structures are detectable. Is 7-fold less neurotoxic than omega-ctenitoxin-Cs1a on drosophila flies. Its function is as follows. Blocks voltage-activated calcium channels (Cav). Is 190-fold less neurotoxic than omega-ctenitoxin-Cs1a on drosophila flies. The chain is Toxin CSTX-1 from Cupiennius salei (American wandering spider).